Reading from the N-terminus, the 356-residue chain is MFPSLQSFAKKVLARQHVSIDHHIILERCGLWWYKAPISLDCKHMLIKLPNFADGLDLNTALMLATKENNYQLIKMFTDWGADINYGLICANTPPVREFCWELGAKYQVDKKKIMHIFFKLIHPSTTSSNIILCLKLFNDNPFSAYVIIREIKSCIHWKLKKLAEDTNVLSNISDGDMLTIYCFIVALQDNLREAISYVYQHFKYLNTWWLTCVLCYNKVFDLHHLYEKEKIRMDMDEMMRIACTKDNNFLTIYYCFILGANINLAMIASIQFYNIDNLFFCIDLGADAFEEAKALAEQRNYFLISHCLSLDIYSPDSSLLTLKEADPNKIYHLLKNYKSKSILAYLNYDVNNTTL.

The ANK repeat unit spans residues 57 to 89 (DLNTALMLATKENNYQLIKMFTDWGADINYGLI). Asparagine 172 is a glycosylation site (N-linked (GlcNAc...) asparagine; by host). Residues 249–271 (NFLTIYYCFILGANINLAMIASI) traverse the membrane as a helical segment. Asparagine 352 and asparagine 353 each carry an N-linked (GlcNAc...) asparagine; by host glycan.

The protein belongs to the asfivirus MGF 360 family.

It is found in the host membrane. In terms of biological role, plays a role in virus cell tropism, and may be required for efficient virus replication in macrophages. The protein is Protein MGF 360-10L of African swine fever virus (isolate Tick/South Africa/Pretoriuskop Pr4/1996) (ASFV).